Reading from the N-terminus, the 533-residue chain is MAPPAMAFQALALGPLPLPLPAARRRRRVRVLAVAADHTPPPPPSPSSPPEPANSPSRLLRELAERKKAVSPKKKHPPRRFILKPPLDDERLTQRFLSSPQLSLKALPLLSSCLPSAPLSAADRTWMDEYLLEAKQALGYPLAPSETLGDGDDDGCPARHFDVLLYLAFQHLDTSCERTRTRHVRSGHSRLWFLGQYVLELAFCEFFLQRYPRESPGPMRERVFALIGKRAIPKWIKAASLHNLVFPYDDLDKMIRKDREPPAKAVFWALFGAIYLCFGMPEVYRVLFEAFGMDPEDESCQPKLRRQLEDVDYVSVEFEKRQLTWQDVAAYRPPPDALFAHPRLFRACVPPGMHRFRGNIWDFDNRPKVMNTLGYPLPMNDRIPEITEARNIELGLGLQLCFLHPSKHKFEHPRFCLERLEYVGQKIQDLVMAERLLMKHLDAPGRWLAEKHRRLLMNKYCGRYLRDKHLHHYIIYGESVQDRFEHNRRLRNPSTTAVQQAIHGLAYCVYGKPDVRRLMFEVFDFEQVQPKAV.

The transit peptide at 1 to 30 (MAPPAMAFQALALGPLPLPLPAARRRRRVR) directs the protein to the chloroplast. Disordered regions lie at residues 31–57 (VLAV…NSPS) and 66–85 (RKKA…ILKP). Over residues 39-53 (TPPPPPSPSSPPEPA) the composition is skewed to pro residues. Basic residues predominate over residues 69 to 82 (AVSPKKKHPPRRFI). 2 RNase III domains span residues 164–279 (LLYL…LCFG) and 411–511 (EHPR…CVYG).

Interacts with RNA. Part of large ribonucleo-protein particles that contain CAF1 and/or CAF2.

It localises to the plastid. Its subcellular location is the chloroplast. Functionally, binds specific group II introns in chloroplasts and facilitates their splicing. Acts on both subgroup IIA and subgroup IIB introns. The substrates of the subgroup II also require the CRM domain proteins CAF1 or CAF2. Binds both single-stranded and double-stranded RNA non-specifically, but lacks endonuclease activity. Required for plastid ribosome biogenesis. In Oryza sativa subsp. japonica (Rice), this protein is Ribonuclease III domain-containing protein RNC1, chloroplastic.